A 176-amino-acid polypeptide reads, in one-letter code: MLIPPINLHAWIEEHRHLLKPPVGNKCIQQDGFIIMIVGGPNARTDYHYDEGPEWFFQLEGEMVLKVQDDGVARDIPIRAGEIFLLPPRVPHSPQRAAGSIGIVIERVRLPHEQDGLQWYCPQCNHKLYEAMFPLKNIETDFPPVFDHFYRSLALRTCSQCGHLHPAPERYAAVED.

O2 is bound at residue Arg-44. His-48, Glu-54, and His-92 together coordinate Fe cation. Glu-54 is a substrate binding site. Residues Arg-96 and Glu-106 each coordinate substrate. Cys-121, Cys-124, Cys-158, and Cys-161 together coordinate Fe cation.

The protein belongs to the 3-HAO family. As to quaternary structure, homodimer. It depends on Fe(2+) as a cofactor.

It carries out the reaction 3-hydroxyanthranilate + O2 = (2Z,4Z)-2-amino-3-carboxymuconate 6-semialdehyde. The protein operates within cofactor biosynthesis; NAD(+) biosynthesis; quinolinate from L-kynurenine: step 3/3. Functionally, catalyzes the oxidative ring opening of 3-hydroxyanthranilate to 2-amino-3-carboxymuconate semialdehyde, which spontaneously cyclizes to quinolinate. The sequence is that of 3-hydroxyanthranilate 3,4-dioxygenase from Xanthomonas oryzae pv. oryzae (strain MAFF 311018).